A 264-amino-acid chain; its full sequence is tRNA pseudouridine synthase A (264 aa).

Catalysis depends on Asp-54, which acts as the Nucleophile. Tyr-113 provides a ligand contact to substrate.

It belongs to the tRNA pseudouridine synthase TruA family. In terms of assembly, homodimer.

It carries out the reaction uridine(38/39/40) in tRNA = pseudouridine(38/39/40) in tRNA. Formation of pseudouridine at positions 38, 39 and 40 in the anticodon stem and loop of transfer RNAs. This Leptospira biflexa serovar Patoc (strain Patoc 1 / Ames) protein is tRNA pseudouridine synthase A.